Reading from the N-terminus, the 61-residue chain is Small ribosomal subunit protein uS14 (61 aa).

Residues C24, C27, C40, and C43 each contribute to the Zn(2+) site.

Belongs to the universal ribosomal protein uS14 family. Zinc-binding uS14 subfamily. Part of the 30S ribosomal subunit. Contacts proteins S3 and S10. The cofactor is Zn(2+).

In terms of biological role, binds 16S rRNA, required for the assembly of 30S particles and may also be responsible for determining the conformation of the 16S rRNA at the A site. In Thermosipho africanus (strain TCF52B), this protein is Small ribosomal subunit protein uS14.